The following is a 476-amino-acid chain: MSYAKTQTQSKSGYQAGVKDYKLTYYTPDYIPKDTDLLAAFRMSPQPGVPPEEAGAAVAAESSTGTWTTVWTDLLTDLDRYKGRCYDIESVPGEDNQYICYVAYPLDLFEEGSVTNMLTSIVGNVFGFKALRSLRLEDLRIPVAYLKTFQGPPHGITVERDKLNKYGRPLLGCTIKPKLGLSAKNYGRAVYECLRGGLDFTKDDENINSQPFMRWRDRFLFAQEAIEKAQAETGEIKGHYLNVTAPTCEEMLERADFAKEIGTPIIMHDYLTGGFTANTTLAKWCRRNGVLLHIHRAMHAVIDRQKAHGIHFRVLAKCLRMSGGDHLHSGTVVGKLEGEKGITMGFVDLMREDHVEQDRERGIYFTQDWASMPGVMPVASGGIHVWHMPALVEIFGDDSCLQFGGGTLGHPWGNAPGATANRVALEACIQARNEGRNLFREGGDVIREAAKWSPDLAVACELWKEIKFEFEAMDTL.

Residues Asn124 and Thr174 each contribute to the substrate site. Residue Lys176 is the Proton acceptor of the active site. Position 178 (Lys178) interacts with substrate. Residues Lys202, Asp204, and Glu205 each coordinate Mg(2+). An N6-carboxylysine modification is found at Lys202. His295 serves as the catalytic Proton acceptor. Residues Arg296, His328, and Ser380 each contribute to the substrate site.

The protein belongs to the RuBisCO large chain family. Type I subfamily. In terms of assembly, heterohexadecamer of 8 large chains and 8 small chains; disulfide-linked. The disulfide link is formed within the large subunit homodimers. Requires Mg(2+) as cofactor. In terms of processing, the disulfide bond which can form in the large chain dimeric partners within the hexadecamer appears to be associated with oxidative stress and protein turnover.

The protein localises to the carboxysome. It carries out the reaction 2 (2R)-3-phosphoglycerate + 2 H(+) = D-ribulose 1,5-bisphosphate + CO2 + H2O. The enzyme catalyses D-ribulose 1,5-bisphosphate + O2 = 2-phosphoglycolate + (2R)-3-phosphoglycerate + 2 H(+). Its function is as follows. RuBisCO catalyzes two reactions: the carboxylation of D-ribulose 1,5-bisphosphate, the primary event in carbon dioxide fixation, as well as the oxidative fragmentation of the pentose substrate in the photorespiration process. Both reactions occur simultaneously and in competition at the same active site. The polypeptide is Ribulose bisphosphate carboxylase large chain (Trichodesmium erythraeum (strain IMS101)).